We begin with the raw amino-acid sequence, 107 residues long: Large ribosomal subunit protein bL21 (107 aa).

This sequence belongs to the bacterial ribosomal protein bL21 family. In terms of assembly, part of the 50S ribosomal subunit. Contacts protein L20.

In terms of biological role, this protein binds to 23S rRNA in the presence of protein L20. This Chlamydia muridarum (strain MoPn / Nigg) protein is Large ribosomal subunit protein bL21.